The chain runs to 434 residues: Aspartate--tRNA(Asp/Asn) ligase (434 aa).

E167 is an L-aspartate binding site. An aspartate region spans residues 189–192 (QLFK). An L-aspartate-binding site is contributed by R211. Residues 211 to 213 (RAE), 219 to 221 (RHL), and E357 each bind ATP. E357 and S360 together coordinate Mg(2+). L-aspartate-binding residues include S360 and R364. 405–408 (GGER) serves as a coordination point for ATP.

This sequence belongs to the class-II aminoacyl-tRNA synthetase family. Type 2 subfamily. As to quaternary structure, homodimer. Mg(2+) is required as a cofactor.

Its subcellular location is the cytoplasm. The enzyme catalyses tRNA(Asx) + L-aspartate + ATP = L-aspartyl-tRNA(Asx) + AMP + diphosphate. Its function is as follows. Aspartyl-tRNA synthetase with relaxed tRNA specificity since it is able to aspartylate not only its cognate tRNA(Asp) but also tRNA(Asn). Reaction proceeds in two steps: L-aspartate is first activated by ATP to form Asp-AMP and then transferred to the acceptor end of tRNA(Asp/Asn). This is Aspartate--tRNA(Asp/Asn) ligase from Haloquadratum walsbyi (strain DSM 16790 / HBSQ001).